Reading from the N-terminus, the 885-residue chain is Cytosolic carboxypeptidase-like protein 5 (885 aa).

Positions 157 to 570 constitute a Peptidase M14 domain; that stretch reads YPFSYSDCQD…AMAIAALDMA (414 aa). Zn(2+) contacts are provided by H252 and E255. The disordered stretch occupies residues 343 to 402; sequence NSQSPSEHQHSSHLPPDAPLSDPEKADSLQNRAHLGRSSSGDKPEAWTQTEVAEQKPNSV. Residues 388–402 show a composition bias toward polar residues; it reads AWTQTEVAEQKPNSV. H434 is a Zn(2+) binding site. E516 (proton donor/acceptor) is an active-site residue. Disordered regions lie at residues 605 to 733 and 783 to 839; these read TTVN…LASS and RLQA…PRPC. Positions 620 to 640 are enriched in polar residues; the sequence is PPRSNNGLPVSCSENTLSRAR. 2 stretches are compositionally biased toward low complexity: residues 641 to 666 and 714 to 733; these read SFST…NSPS and PTSS…LASS. At S840 the chain carries Phosphoserine.

Belongs to the peptidase M14 family. Zn(2+) is required as a cofactor.

The protein resides in the cytoplasm. The protein localises to the cytosol. It is found in the nucleus. Its subcellular location is the cytoskeleton. It localises to the spindle. The protein resides in the midbody. It catalyses the reaction gamma-L-glutamyl-L-glutamyl-[protein] + H2O = L-glutamyl-[protein] + L-glutamate. The enzyme catalyses (L-glutamyl)(n+1)-gamma-L-glutamyl-L-glutamyl-[protein] + H2O = (L-glutamyl)(n)-gamma-L-glutamyl-L-glutamyl-[protein] + L-glutamate. The catalysed reaction is C-terminal L-alpha-aminoacyl-L-glutamyl-[tubulin] + H2O = C-terminal L-alpha-aminoacyl-[tubulin] + L-glutamate. It carries out the reaction C-terminal L-alpha-aminoacyl-L-glutamyl-L-glutamyl-[tubulin] + H2O = C-terminal L-alpha-aminoacyl-L-glutamyl-[tubulin] + L-glutamate. Its function is as follows. Metallocarboxypeptidase that mediates deglutamylation of tubulin and non-tubulin target proteins. Catalyzes the removal of polyglutamate side chains present on the gamma-carboxyl group of glutamate residues within the C-terminal tail of alpha- and beta-tubulin. Cleaves alpha- and gamma-linked polyglutamate tubulin side-chain, as well as the branching point glutamate. Also catalyzes the removal of alpha-linked glutamate residues from the carboxy-terminus of alpha-tubulin. Mediates deglutamylation of nucleotidyltransferase CGAS, leading to CGAS antiviral defense response activation. The polypeptide is Cytosolic carboxypeptidase-like protein 5 (AGBL5) (Bos taurus (Bovine)).